The chain runs to 159 residues: Elicitor-responsive protein 1 (159 aa).

One can recognise a C2 domain in the interval 1–112 (MAGSGVLEVH…SLGMEHGTWE (112 aa)). Ca(2+)-binding residues include aspartate 21 and aspartate 30. Serine 44 bears the Phosphoserine; by CPK mark. Positions 81, 83, 86, and 89 each coordinate Ca(2+).

Ca(2+) is required as a cofactor. Post-translationally, phosphorylated at Ser-44 by CPK18 in a calcium-dependent manner. Isoform 2 is expressed in young vascular tissues and tiller buds.

Its subcellular location is the cytoplasm. It is found in the cell membrane. Functionally, may play a role in plant defense signaling. Isoform 2 binds to phospholipids in a Ca(2+)-dependent manner in response to pathogen elicitors. In Oryza sativa subsp. japonica (Rice), this protein is Elicitor-responsive protein 1 (ERG1).